We begin with the raw amino-acid sequence, 306 residues long: Recombination-associated protein RdgC (306 aa).

Belongs to the RdgC family.

It is found in the cytoplasm. Its subcellular location is the nucleoid. Its function is as follows. May be involved in recombination. This chain is Recombination-associated protein RdgC, found in Pseudomonas syringae pv. tomato (strain ATCC BAA-871 / DC3000).